A 262-amino-acid chain; its full sequence is 14-3-3 protein I (262 aa).

It belongs to the 14-3-3 family. Homodimer. Forms a complex composed of CDPK1, PKA regulatory subunit PKAr and 14-3-3I; the complex is formed in merozoites in response to low extracellular level of K(+) and may play a role in microneme secretion. Interacts with CDPK1 (when phosphorylated) in a Ca(2+)-independent manner; the interaction does not regulate CDPK1 catalytic activity but is required for merozoite invasion of host erythrocytes. Interacts with PKA regulatory subunit PKAr (when phosphorylated) in a Ca(2+)-dependent manner. Interacts with histone H3 (when phosphorylated at 'Ser-28' or when phosphorylated at 'Ser-28' and 'Ser-32').

The protein localises to the cell membrane. Its subcellular location is the cytoplasm. It is found in the nucleus. In terms of biological role, adapter protein which binds to its partners, usually via a phosphoserine or phosphothreonine motif. Binding generally results in the modulation of the activity and/or cellular localization of the binding partner. Via its interaction with CDPK1 and PKAr, involved in merozoite microneme secretion and thus in merozoite invasion of host erythrocytes. The chain is 14-3-3 protein I from Plasmodium falciparum (isolate 3D7).